The following is a 193-amino-acid chain: Pyridoxal 5'-phosphate synthase subunit PdxT (193 aa).

Position 50–52 (50–52 (GES)) interacts with L-glutamine. The active-site Nucleophile is the Cys-82. Residues Arg-109 and 136 to 137 (IR) each bind L-glutamine. Catalysis depends on charge relay system residues His-172 and Glu-174.

Belongs to the glutaminase PdxT/SNO family. As to quaternary structure, in the presence of PdxS, forms a dodecamer of heterodimers. Only shows activity in the heterodimer.

It catalyses the reaction aldehydo-D-ribose 5-phosphate + D-glyceraldehyde 3-phosphate + L-glutamine = pyridoxal 5'-phosphate + L-glutamate + phosphate + 3 H2O + H(+). The enzyme catalyses L-glutamine + H2O = L-glutamate + NH4(+). Its pathway is cofactor biosynthesis; pyridoxal 5'-phosphate biosynthesis. In terms of biological role, catalyzes the hydrolysis of glutamine to glutamate and ammonia as part of the biosynthesis of pyridoxal 5'-phosphate. The resulting ammonia molecule is channeled to the active site of PdxS. In Streptococcus pneumoniae (strain JJA), this protein is Pyridoxal 5'-phosphate synthase subunit PdxT.